Consider the following 290-residue polypeptide: CMRF35-like molecule 1 (290 aa).

Positions Met1 to Val19 are cleaved as a signal peptide. Residues Thr20–Asp126 enclose the Ig-like V-type domain. Over Thr20–Ser156 the chain is Extracellular. Cystine bridges form between Cys40/Cys108 and Cys54/Cys62. N-linked (GlcNAc...) asparagine glycosylation occurs at Asn88. Residues Val157–Ala177 form a helical membrane-spanning segment. Residues Trp178–Pro290 lie on the Cytoplasmic side of the membrane. Residues Gly267 to Pro290 form a disordered region.

It belongs to the CD300 family. In terms of assembly, interacts with PTPN6/SHP-1 in a tyrosine phosphorylation dependent manner. Interacts with IL4R. Post-translationally, phosphorylated on tyrosine. Highly expressed in spleen, peripheral blood leukocyte and monocyte, and lung. Weakly expressed in thymus, heart, brain, placenta, liver, skeletal muscle, kidney, pancreas, prostate, testis, ovary, small intestine or colon. Expressed selectively in monocytes and monocyte-related cells.

It localises to the cell membrane. In terms of biological role, acts as an inhibitory receptor for myeloid cells and mast cells. Positively regulates the phagocytosis of apoptotic cells (efferocytosis) via phosphatidylserine (PS) recognition; recognizes and binds PS as a ligand which is expressed on the surface of apoptotic cells. Plays an important role in the maintenance of immune homeostasis, by promoting macrophage-mediated efferocytosis and by inhibiting dendritic cell-mediated efferocytosis. Negatively regulates Fc epsilon receptor-dependent mast cell activation and allergic responses via binding to ceramide and sphingomyelin which act as ligands. May act as a coreceptor for interleukin 4 (IL-4). Associates with and regulates IL-4 receptor alpha-mediated responses by augmenting IL-4- and IL-13-induced signaling. Negatively regulates the Toll-like receptor (TLR) signaling mediated by MYD88 and TRIF through activation of PTPN6/SHP-1 and PTPN11/SHP-2. Inhibits osteoclast formation. Induces macrophage cell death upon engagement. The sequence is that of CMRF35-like molecule 1 (CD300LF) from Homo sapiens (Human).